Here is a 134-residue protein sequence, read N- to C-terminus: ATP synthase epsilon chain (134 aa).

This sequence belongs to the ATPase epsilon chain family. In terms of assembly, F-type ATPases have 2 components, CF(1) - the catalytic core - and CF(0) - the membrane proton channel. CF(1) has five subunits: alpha(3), beta(3), gamma(1), delta(1), epsilon(1). CF(0) has three main subunits: a, b and c.

The protein resides in the cell membrane. Produces ATP from ADP in the presence of a proton gradient across the membrane. The protein is ATP synthase epsilon chain of Clostridium botulinum (strain Alaska E43 / Type E3).